The following is a 262-amino-acid chain: MINVFPVRAFRDNYIWIVHNQQFALIIDPGDATPVLTWLRQQKLQPIAILCTHHHHDHTGGISLLVQKFEIPVYGPASEKIPGMTHPLAEGDTLVFPELSLELSILDVPGHTAGHIACHGQNRLFCGDTLFACGCGRIFEGNAQQMFDSLQKLTDLPDETQVYCAHEYTLDNIRFARAIDPDNPELIELESNVEEKREQNMPTLPSSLAAEKATNPFLRCNQPAIIQSASRYAGRQLTDPVSVFAAIRDWKNNFRGNTDLPM.

Positions 53, 55, 57, 58, 111, 128, and 166 each coordinate Zn(2+).

This sequence belongs to the metallo-beta-lactamase superfamily. Glyoxalase II family. As to quaternary structure, monomer. The cofactor is Zn(2+).

It carries out the reaction an S-(2-hydroxyacyl)glutathione + H2O = a 2-hydroxy carboxylate + glutathione + H(+). It functions in the pathway secondary metabolite metabolism; methylglyoxal degradation; (R)-lactate from methylglyoxal: step 2/2. Its function is as follows. Thiolesterase that catalyzes the hydrolysis of S-D-lactoyl-glutathione to form glutathione and D-lactic acid. The polypeptide is Hydroxyacylglutathione hydrolase (Nitrosomonas europaea (strain ATCC 19718 / CIP 103999 / KCTC 2705 / NBRC 14298)).